A 428-amino-acid polypeptide reads, in one-letter code: Adenylosuccinate synthetase (428 aa).

Residues 12-18 and 40-42 contribute to the GTP site; these read GDEGKGK and GHT. The active-site Proton acceptor is the aspartate 13. Aspartate 13 and glycine 40 together coordinate Mg(2+). IMP-binding positions include 13 to 16, 38 to 41, threonine 128, arginine 142, glutamine 223, threonine 238, and arginine 302; these read DEGK and NAGH. The active-site Proton donor is histidine 41. Position 298 to 304 (298 to 304) interacts with substrate; it reads TTTGRPR. Residues arginine 304, 330 to 332, and 412 to 414 each bind GTP; these read SID and SVG.

The protein belongs to the adenylosuccinate synthetase family. In terms of assembly, homodimer. It depends on Mg(2+) as a cofactor.

It is found in the cytoplasm. It catalyses the reaction IMP + L-aspartate + GTP = N(6)-(1,2-dicarboxyethyl)-AMP + GDP + phosphate + 2 H(+). It participates in purine metabolism; AMP biosynthesis via de novo pathway; AMP from IMP: step 1/2. Functionally, plays an important role in the de novo pathway of purine nucleotide biosynthesis. Catalyzes the first committed step in the biosynthesis of AMP from IMP. The chain is Adenylosuccinate synthetase from Shouchella clausii (strain KSM-K16) (Alkalihalobacillus clausii).